The sequence spans 387 residues: SLC2A4 regulator (387 aa).

Disordered regions lie at residues 1–97 and 139–179; these read MERP…RATP and EALV…PPEA. Residues 27–36 are compositionally biased toward low complexity; the sequence is GPGPRAAPVT. The C2H2-type zinc finger occupies 200 to 225; the sequence is FQCLWKSCGKVLSTASAMQRHIRLVH. Residues 253 to 263 carry the Nuclear export signal motif; the sequence is LTDGLSSLTPV. A phosphoserine mark is found at serine 264 and serine 268. Residues 283-305 form a disordered region; that stretch reads EPPALPSPLRPPAPPLPPPPVLS. Residues 285–303 are compositionally biased toward pro residues; that stretch reads PALPSPLRPPAPPLPPPPV. The Nuclear localization signal motif lies at 351-354; that stretch reads RKPR.

In terms of assembly, interacts with MEF2A. According to PubMed:14630949, expressed in heart, skeletal muscle, liver, kidney and pancreas; undetectable in lung, placenta or brain. According to PubMed:14625278, ubiquitously expressed, with lowest expression in brain and ileum.

The protein resides in the cytoplasm. It localises to the nucleus. In terms of biological role, transcription factor involved in SLC2A4 and HD gene transactivation. Binds to the consensus sequence 5'-GCCGGCG-3'. This is SLC2A4 regulator (SLC2A4RG) from Homo sapiens (Human).